The sequence spans 411 residues: Lissencephaly-1 homolog (411 aa).

Residues 9-41 (QREELNQAIADYLGSNGYADSLETFRKEADLST) form the LisH domain. A coiled-coil region spans residues 56–83 (TSVIRLQKKVMELEAKLTEAEKEVIEGA). WD repeat units lie at residues 106–147 (GHRA…RSLK), 148–187 (GHTD…ECIK), 191–230 (GHDH…CVKT), 233–272 (GHRE…CKVE), 275–334 (DHEH…CLLT), 337–376 (GHDN…CMKT), and 379–411 (AHQH…WECR).

The protein belongs to the WD repeat LIS1/nudF family.

The protein localises to the cytoplasm. It is found in the cytoskeleton. The protein resides in the microtubule organizing center. Its subcellular location is the centrosome. Functionally, positively regulates the activity of the minus-end directed microtubule motor protein dynein. May enhance dynein-mediated microtubule sliding by targeting dynein to the microtubule plus end. Required for several dynein- and microtubule-dependent processes. This chain is Lissencephaly-1 homolog, found in Drosophila yakuba (Fruit fly).